A 142-amino-acid chain; its full sequence is Nucleoside diphosphate kinase (142 aa).

Residues lysine 11, phenylalanine 59, arginine 87, threonine 93, arginine 104, and asparagine 114 each coordinate ATP. The active-site Pros-phosphohistidine intermediate is the histidine 117.

This sequence belongs to the NDK family. In terms of assembly, homotetramer. Mg(2+) serves as cofactor.

It is found in the cytoplasm. It catalyses the reaction a 2'-deoxyribonucleoside 5'-diphosphate + ATP = a 2'-deoxyribonucleoside 5'-triphosphate + ADP. The enzyme catalyses a ribonucleoside 5'-diphosphate + ATP = a ribonucleoside 5'-triphosphate + ADP. In terms of biological role, major role in the synthesis of nucleoside triphosphates other than ATP. The ATP gamma phosphate is transferred to the NDP beta phosphate via a ping-pong mechanism, using a phosphorylated active-site intermediate. The polypeptide is Nucleoside diphosphate kinase (Pectobacterium carotovorum subsp. carotovorum (strain PC1)).